A 477-amino-acid polypeptide reads, in one-letter code: Monocarboxylate transporter 12-B (477 aa).

At 1–9 (MAQEKKKGG) the chain is on the cytoplasmic side. Helical transmembrane passes span 10–30 (VLPP…VVTV), 58–78 (AWIH…GSLI), 86–106 (IAVI…SFAT), 116–136 (GLLT…MVGI), 148–168 (IAMS…QLLI), 178–198 (LILG…RPII), 253–273 (FLVL…PFVY), 289–309 (AFLM…FGWL), 320–340 (NICY…IPLL), 344–364 (VWLV…VALI), 383–403 (VVYF…GWLV), and 413–433 (FFLS…VAII). Over 434–477 (RYCQRNQKKNSLSKIPKLVSCEGKQVDYYPPKNKDLMLIIPATS) the chain is Cytoplasmic.

The protein belongs to the major facilitator superfamily. Monocarboxylate porter (TC 2.A.1.13) family.

It is found in the cell membrane. Its subcellular location is the basolateral cell membrane. It carries out the reaction creatine(in) = creatine(out). The enzyme catalyses guanidinoacetate(in) = guanidinoacetate(out). Functions as a transporter for creatine and as well for its precursor guanidinoacetate. Transport of creatine and GAA is independent of resting membrane potential and extracellular Na(+), Cl(-), or pH. Contributes to the process of creatine biosynthesis and distribution. The chain is Monocarboxylate transporter 12-B (slc16a12b) from Danio rerio (Zebrafish).